The primary structure comprises 255 residues: tRNA (adenine(58)-N(1))-methyltransferase TrmI (255 aa).

Residues Ser-104–Leu-107, Glu-125, His-130, Glu-155, and Asp-170 contribute to the S-adenosyl-L-methionine site.

Belongs to the class I-like SAM-binding methyltransferase superfamily. TRM61 family. In terms of assembly, homotetramer composed of a dimer of dimers.

It carries out the reaction adenosine(58) in tRNA + S-adenosyl-L-methionine = N(1)-methyladenosine(58) in tRNA + S-adenosyl-L-homocysteine + H(+). Functionally, catalyzes the S-adenosyl-L-methionine-dependent formation of N(1)-methyladenine at position 58 (m1A58) in tRNA. This is tRNA (adenine(58)-N(1))-methyltransferase TrmI (trmI) from Thermus thermophilus (strain ATCC 27634 / DSM 579 / HB8).